Reading from the N-terminus, the 255-residue chain is Gene 54 protein (255 aa).

The sequence is that of Gene 54 protein (54) from Mycobacterium (Mycobacteriophage L5).